The sequence spans 104 residues: PE-PGRS family protein PE_PGRS60 (104 aa).

Residues 1–60 (MSYVIAAPEALVAAATDLATLGSTIGAANAAAAGSTTALLTAGADEVSAAIAAYSECTAR) enclose the PE domain. The segment at 64-104 (HSVRGRRRSMSGSCRPWPQVGAPMRPPRPPASRRCRARSIC) is disordered. Over residues 94–104 (ASRRCRARSIC) the composition is skewed to basic residues.

It belongs to the mycobacterial PE family. PGRS subfamily.

Binds fibronectin. May contribute to pathogenicity. This Mycobacterium tuberculosis (strain ATCC 25618 / H37Rv) protein is PE-PGRS family protein PE_PGRS60.